A 122-amino-acid polypeptide reads, in one-letter code: UPF0231 protein VF_2154 (122 aa).

The protein belongs to the UPF0231 family.

This chain is UPF0231 protein VF_2154, found in Aliivibrio fischeri (strain ATCC 700601 / ES114) (Vibrio fischeri).